The primary structure comprises 1178 residues: F-box/WD repeat-containing protein A-like protein (1178 aa).

An START domain is found at 1–208 (MQYVNGMDIV…TLPNLIKYIK (208 aa)). Disordered regions lie at residues 223–296 (KTPD…NLNE), 569–594 (SLII…DNGI), and 618–649 (SSSS…STFS). Composition is skewed to low complexity over residues 229-293 (NPNL…SNEN) and 571-580 (IINSPPNSNN). The 47-residue stretch at 717–763 (CSLFDLLPYEMIQYIFTLMDATHLIRMSRTCKYFNRICLDDNIWRDL) folds into the F-box domain. The tract at residues 804-841 (KKSNNSSPLSASSSSSSPSPPLLPPPPPPIPQLPDMLL) is disordered. The span at 809–820 (SSPLSASSSSSS) shows a compositional bias: low complexity. Positions 821–835 (PSPPLLPPPPPPIPQ) are enriched in pro residues. 7 WD repeats span residues 886–923 (GHKG…CEST), 925–979 (RCGA…IEKE), 981–1017 (RFLY…ELQM), 1020–1059 (IENT…TELV), 1062–1100 (GHKG…SAIH), 1104–1141 (SHSS…EPNL), and 1146–1178 (NNLS…FNSK).

Its function is as follows. Substrate recognition component of a SCF (SKP1-CUL1-F-box protein) E3 ubiquitin-protein ligase complex which mediates the ubiquitination and subsequent proteasomal degradation of target proteins. This chain is F-box/WD repeat-containing protein A-like protein, found in Dictyostelium discoideum (Social amoeba).